The chain runs to 505 residues: Lysine--tRNA ligase (505 aa).

Mg(2+) contacts are provided by E415 and E422.

The protein belongs to the class-II aminoacyl-tRNA synthetase family. Homodimer. Mg(2+) serves as cofactor.

It localises to the cytoplasm. The catalysed reaction is tRNA(Lys) + L-lysine + ATP = L-lysyl-tRNA(Lys) + AMP + diphosphate. This Salmonella paratyphi C (strain RKS4594) protein is Lysine--tRNA ligase.